We begin with the raw amino-acid sequence, 830 residues long: Serine/threonine-protein kinase pkn2 (830 aa).

Topologically, residues 1 to 605 are cytoplasmic; the sequence is MLAPDSLVLD…GELLRQRRRE (605 aa). One can recognise a Protein kinase domain in the interval 13-283; sequence FRVLRPLGSG…DALAAAHSAL (271 aa). Residues 19–27 and lysine 42 contribute to the ATP site; that span reads LGSGGMGEV. Aspartate 135 acts as the Proton acceptor in catalysis. Residues 296 to 326 are disordered; it reads VPQPGSGATPSSGTSVFGTGSASGSSSGPTG. Over residues 299–326 the composition is skewed to low complexity; it reads PGSGATPSSGTSVFGTGSASGSSSGPTG. The 116-residue stretch at 396-511 folds into the Guanylate cyclase domain; the sequence is TVMLTDIQGF…EPMEVIEAVE (116 aa). A helical membrane pass occupies residues 606-623; the sequence is AALVAGAVVLLGAGAAWL. Residues 624 to 830 are Periplasmic-facing; the sequence is SQRNDAGTRA…AIKSLKQKSD (207 aa).

Belongs to the protein kinase superfamily. Ser/Thr protein kinase family.

It is found in the cell membrane. It catalyses the reaction L-seryl-[protein] + ATP = O-phospho-L-seryl-[protein] + ADP + H(+). It carries out the reaction L-threonyl-[protein] + ATP = O-phospho-L-threonyl-[protein] + ADP + H(+). Its function is as follows. Regulates the activity of endogenous beta-lactamase or related enzymes, by blocking their secretion by phosphorylation, in response to an external signal yet to be identified. The polypeptide is Serine/threonine-protein kinase pkn2 (pkn2) (Myxococcus xanthus).